The sequence spans 306 residues: Ornithine carbamoyltransferase (306 aa).

Residues 51 to 54 (STRT), glutamine 78, arginine 102, and 129 to 132 (HPCQ) each bind carbamoyl phosphate. L-ornithine contacts are provided by residues asparagine 160, aspartate 223, and 227-228 (SM). Carbamoyl phosphate is bound by residues 263–264 (CL) and arginine 291.

It belongs to the aspartate/ornithine carbamoyltransferase superfamily. OTCase family.

It is found in the cytoplasm. It carries out the reaction carbamoyl phosphate + L-ornithine = L-citrulline + phosphate + H(+). It functions in the pathway amino-acid biosynthesis; L-arginine biosynthesis; L-arginine from L-ornithine and carbamoyl phosphate: step 1/3. In terms of biological role, reversibly catalyzes the transfer of the carbamoyl group from carbamoyl phosphate (CP) to the N(epsilon) atom of ornithine (ORN) to produce L-citrulline. In Nostoc sp. (strain PCC 7120 / SAG 25.82 / UTEX 2576), this protein is Ornithine carbamoyltransferase.